A 92-amino-acid chain; its full sequence is RNA-binding protein Hfq (92 aa).

The 60-residue stretch at 9–68 (DPFLNALRRERVPVSVYLVNGIKLQGTIESFDQFVVLLRNTVSQMVYKHAISTVVPARNV) folds into the Sm domain. Positions 73 to 92 (GGGYVQSNEGNQAEDDDVEQ) are disordered.

It belongs to the Hfq family. Homohexamer.

RNA chaperone that binds small regulatory RNA (sRNAs) and mRNAs to facilitate mRNA translational regulation in response to envelope stress, environmental stress and changes in metabolite concentrations. Also binds with high specificity to tRNAs. The polypeptide is RNA-binding protein Hfq (Xanthomonas axonopodis pv. citri (strain 306)).